A 286-amino-acid chain; its full sequence is Polyamine aminopropyltransferase (286 aa).

A PABS domain is found at 5–238; that stretch reads TMWHETLHDQ…GIMTFAWATD (234 aa). S-methyl-5'-thioadenosine is bound at residue Gln-33. Positions 64 and 88 each coordinate spermidine. S-methyl-5'-thioadenosine is bound by residues Glu-108 and 140 to 141; that span reads DG. Asp-158 acts as the Proton acceptor in catalysis. Spermidine is bound at residue 158–161; sequence DCTD. Pro-165 lines the S-methyl-5'-thioadenosine pocket.

This sequence belongs to the spermidine/spermine synthase family. Homodimer or homotetramer.

The protein localises to the cytoplasm. The enzyme catalyses S-adenosyl 3-(methylsulfanyl)propylamine + putrescine = S-methyl-5'-thioadenosine + spermidine + H(+). It functions in the pathway amine and polyamine biosynthesis; spermidine biosynthesis; spermidine from putrescine: step 1/1. In terms of biological role, catalyzes the irreversible transfer of a propylamine group from the amino donor S-adenosylmethioninamine (decarboxy-AdoMet) to putrescine (1,4-diaminobutane) to yield spermidine. The sequence is that of Polyamine aminopropyltransferase from Salmonella arizonae (strain ATCC BAA-731 / CDC346-86 / RSK2980).